The sequence spans 98 residues: Large ribosomal subunit protein bL28 (98 aa).

This sequence belongs to the bacterial ribosomal protein bL28 family.

The polypeptide is Large ribosomal subunit protein bL28 (Mesorhizobium japonicum (strain LMG 29417 / CECT 9101 / MAFF 303099) (Mesorhizobium loti (strain MAFF 303099))).